We begin with the raw amino-acid sequence, 298 residues long: Protease HtpX homolog (298 aa).

2 consecutive transmembrane segments (helical) span residues 15 to 35 and 38 to 58; these read LIMV…GYLF and SPWT…LIMW. His-143 provides a ligand contact to Zn(2+). Glu-144 is an active-site residue. Position 147 (His-147) interacts with Zn(2+). Helical transmembrane passes span 153–173 and 197–217; these read ILLS…SGIA and IIFK…SASL. Glu-227 provides a ligand contact to Zn(2+).

It belongs to the peptidase M48B family. It depends on Zn(2+) as a cofactor.

The protein localises to the cell membrane. In Lactobacillus acidophilus (strain ATCC 700396 / NCK56 / N2 / NCFM), this protein is Protease HtpX homolog.